Consider the following 420-residue polypeptide: Serine hydroxymethyltransferase (420 aa).

(6S)-5,6,7,8-tetrahydrofolate contacts are provided by residues L121 and 125–127 (GHL). K230 carries the post-translational modification N6-(pyridoxal phosphate)lysine. A (6S)-5,6,7,8-tetrahydrofolate-binding site is contributed by 355 to 357 (SPF).

It belongs to the SHMT family. Homodimer. Pyridoxal 5'-phosphate serves as cofactor.

It is found in the cytoplasm. It carries out the reaction (6R)-5,10-methylene-5,6,7,8-tetrahydrofolate + glycine + H2O = (6S)-5,6,7,8-tetrahydrofolate + L-serine. It functions in the pathway one-carbon metabolism; tetrahydrofolate interconversion. It participates in amino-acid biosynthesis; glycine biosynthesis; glycine from L-serine: step 1/1. Functionally, catalyzes the reversible interconversion of serine and glycine with tetrahydrofolate (THF) serving as the one-carbon carrier. This reaction serves as the major source of one-carbon groups required for the biosynthesis of purines, thymidylate, methionine, and other important biomolecules. Also exhibits THF-independent aldolase activity toward beta-hydroxyamino acids, producing glycine and aldehydes, via a retro-aldol mechanism. The chain is Serine hydroxymethyltransferase from Streptococcus gordonii (strain Challis / ATCC 35105 / BCRC 15272 / CH1 / DL1 / V288).